The sequence spans 99 residues: NADH-quinone oxidoreductase subunit K (99 aa).

3 helical membrane-spanning segments follow: residues 3-23, 28-48, and 59-79; these read ILFS…GILI, LIVF…FVAF, and IWVF…LAII.

Belongs to the complex I subunit 4L family. As to quaternary structure, NDH-1 is composed of 14 different subunits. Subunits NuoA, H, J, K, L, M, N constitute the membrane sector of the complex.

Its subcellular location is the cell inner membrane. It catalyses the reaction a quinone + NADH + 5 H(+)(in) = a quinol + NAD(+) + 4 H(+)(out). In terms of biological role, NDH-1 shuttles electrons from NADH, via FMN and iron-sulfur (Fe-S) centers, to quinones in the respiratory chain. The immediate electron acceptor for the enzyme in this species is believed to be ubiquinone. Couples the redox reaction to proton translocation (for every two electrons transferred, four hydrogen ions are translocated across the cytoplasmic membrane), and thus conserves the redox energy in a proton gradient. This chain is NADH-quinone oxidoreductase subunit K, found in Protochlamydia amoebophila (strain UWE25).